The sequence spans 336 residues: 3-isopropylmalate dehydrogenase (336 aa).

Residues Arg-87, Arg-97, Arg-121, and Asp-211 each coordinate substrate. The Mg(2+) site is built by Asp-211, Asp-235, and Asp-239. Gly-271 to Asp-283 contributes to the NAD(+) binding site.

The protein belongs to the isocitrate and isopropylmalate dehydrogenases family. LeuB type 2 subfamily. In terms of assembly, homodimer. It depends on Mg(2+) as a cofactor. Requires Mn(2+) as cofactor.

It is found in the cytoplasm. It carries out the reaction (2R,3S)-3-isopropylmalate + NAD(+) = 4-methyl-2-oxopentanoate + CO2 + NADH. It functions in the pathway amino-acid biosynthesis; L-leucine biosynthesis; L-leucine from 3-methyl-2-oxobutanoate: step 3/4. In terms of biological role, catalyzes the oxidation of 3-carboxy-2-hydroxy-4-methylpentanoate (3-isopropylmalate) to 3-carboxy-4-methyl-2-oxopentanoate. The product decarboxylates to 4-methyl-2 oxopentanoate. This Rhodococcus opacus (strain B4) protein is 3-isopropylmalate dehydrogenase.